The sequence spans 327 residues: Undecaprenyl-phosphate 4-deoxy-4-formamido-L-arabinose transferase (327 aa).

At Met-1–Leu-235 the chain is on the cytoplasmic side. The helical transmembrane segment at Leu-236 to Val-256 threads the bilayer. The Periplasmic segment spans residues Leu-257–Gly-269. A helical transmembrane segment spans residues Val-270–Leu-290. The Cytoplasmic segment spans residues Leu-291 to Gln-327.

Belongs to the glycosyltransferase 2 family.

The protein localises to the cell inner membrane. It catalyses the reaction UDP-4-deoxy-4-formamido-beta-L-arabinose + di-trans,octa-cis-undecaprenyl phosphate = 4-deoxy-4-formamido-alpha-L-arabinopyranosyl di-trans,octa-cis-undecaprenyl phosphate + UDP. It participates in glycolipid biosynthesis; 4-amino-4-deoxy-alpha-L-arabinose undecaprenyl phosphate biosynthesis; 4-amino-4-deoxy-alpha-L-arabinose undecaprenyl phosphate from UDP-4-deoxy-4-formamido-beta-L-arabinose and undecaprenyl phosphate: step 1/2. Its pathway is bacterial outer membrane biogenesis; lipopolysaccharide biosynthesis. Functionally, catalyzes the transfer of 4-deoxy-4-formamido-L-arabinose from UDP to undecaprenyl phosphate. The modified arabinose is attached to lipid A and is required for resistance to polymyxin and cationic antimicrobial peptides. The sequence is that of Undecaprenyl-phosphate 4-deoxy-4-formamido-L-arabinose transferase from Salmonella paratyphi A (strain ATCC 9150 / SARB42).